The following is a 238-amino-acid chain: Small ribosomal subunit protein uS2 (238 aa).

The protein belongs to the universal ribosomal protein uS2 family.

This chain is Small ribosomal subunit protein uS2, found in Moorella thermoacetica (strain ATCC 39073 / JCM 9320).